A 122-amino-acid polypeptide reads, in one-letter code: ATP synthase epsilon chain (122 aa).

This sequence belongs to the ATPase epsilon chain family. F-type ATPases have 2 components, CF(1) - the catalytic core - and CF(0) - the membrane proton channel. CF(1) has five subunits: alpha(3), beta(3), gamma(1), delta(1), epsilon(1). CF(0) has three main subunits: a, b and c.

It localises to the cell membrane. In terms of biological role, produces ATP from ADP in the presence of a proton gradient across the membrane. In Rhodococcus opacus (strain B4), this protein is ATP synthase epsilon chain.